A 105-amino-acid polypeptide reads, in one-letter code: uncharacterized protein (105 aa).

One can recognise a Hcy-binding domain in the interval 1–101; sequence MMDLGDKINP…KDIQEISAAV (101 aa).

This is an uncharacterized protein from Saccharomyces cerevisiae (strain ATCC 204508 / S288c) (Baker's yeast).